The primary structure comprises 864 residues: Ribosome biogenesis protein ERB1 (864 aa).

Residues 1 to 52 (MAVDKGRRPVPPERRAQGRKRAEPGDVTIRETRTRPVHTPEPEPELLAKDGI) show a composition bias toward basic and acidic residues. Disordered stretches follow at residues 1–153 (MAVD…VKEG) and 191–231 (ESRN…STED). Positions 53–71 (LELEDDDDNDDDDDDDDDD) are enriched in acidic residues. Positions 72–83 (KSNHHDGAPKNE) are enriched in basic and acidic residues. Residues 100–135 (DDGDEDEEEDDEDEDEDASDDEAFDSDDLENWDEEA) show a composition bias toward acidic residues. WD repeat units follow at residues 509-549 (AHAP…CVAT), 559-599 (ADRS…KTMY), 694-732 (NSAM…LVKT), 735-774 (PGVR…RPYK), 778-817 (YHSR…DLLQ), and 833-864 (QDAL…LWTP).

This sequence belongs to the WD repeat BOP1/ERB1 family. Component of the NOP7 complex, composed of ERB1, NOP7 and YTM1. The complex is held together by ERB1, which interacts with NOP7 via its N-terminal domain and with YTM1 via a high-affinity interaction between the seven-bladed beta-propeller domains of the 2 proteins. The NOP7 complex associates with the 66S pre-ribosome.

The protein resides in the nucleus. Its subcellular location is the nucleolus. It localises to the nucleoplasm. Functionally, component of the NOP7 complex, which is required for maturation of the 25S and 5.8S ribosomal RNAs and formation of the 60S ribosome. This Malassezia globosa (strain ATCC MYA-4612 / CBS 7966) (Dandruff-associated fungus) protein is Ribosome biogenesis protein ERB1.